The primary structure comprises 582 residues: Semenogelin-2 (582 aa).

A signal peptide spans 1–23 (MKSIILFVLSLLLILEKQAAVMG). Disordered stretches follow at residues 25 to 62 (KGGSKGQLSSGSSRFPHRHRSQHYSGQKDKQHTESKGS), 91 to 190 (HKTT…QGGS), and 272 to 553 (NLNQ…FSGA). A compositionally biased stretch (basic and acidic residues) spans 50-59 (GQKDKQHTES). Basic residues predominate over residues 92–134 (KTTKSKQHLRRHQRLLNYKQKGRGRVKPKRHFHLIVIHRKGGQ). Polar residues-rich tracts occupy residues 137-161 (HGTQNPSQDQGNSPSGKGISSQYSN) and 174-190 (EQASASGAQKGRTQGGS). Over residues 293–305 (TEERQPNHEEKSV) the composition is skewed to basic and acidic residues. Over residues 325–335 (KSQNQVTIPSQ) the composition is skewed to polar residues. Residues 336-345 (DQEHGHKENK) show a composition bias toward basic and acidic residues. Residues 385 to 395 (KSQNQVAIPSQ) are compositionally biased toward polar residues. Over residues 396-405 (DQEHGHKENK) the composition is skewed to basic and acidic residues. Residues 445-455 (KSQNQVTIPSQ) show a composition bias toward polar residues. Residues 456–465 (DQEHGHKENK) show a composition bias toward basic and acidic residues. Polar residues-rich tracts occupy residues 487–498 (KDVSQSSLSFQT) and 506–529 (SQIQTPNPNQGQWSGQNAKGNSGK). Over residues 530-546 (SADRKQDLLSHEQEGRY) the composition is skewed to basic and acidic residues.

The protein belongs to the semenogelin family. As to quaternary structure, interacts with SERPINA5.

It is found in the secreted. Functionally, participates in the formation of a gel matrix (sperm coagulum) entrapping the accessory gland secretions and ejaculated spermatozoa. In Macaca fascicularis (Crab-eating macaque), this protein is Semenogelin-2 (SEMG2).